The chain runs to 438 residues: Glycogen synthase (438 aa).

Lys16 contacts ADP-alpha-D-glucose.

It belongs to the glycosyltransferase 1 family. Bacterial/plant glycogen synthase subfamily.

It carries out the reaction [(1-&gt;4)-alpha-D-glucosyl](n) + ADP-alpha-D-glucose = [(1-&gt;4)-alpha-D-glucosyl](n+1) + ADP + H(+). It participates in glycan biosynthesis; glycogen biosynthesis. Synthesizes alpha-1,4-glucan chains using ADP-glucose. The protein is Glycogen synthase of Thermus caldophilus.